Here is a 67-residue protein sequence, read N- to C-terminus: DNA-directed RNA polymerase subunit omega (67 aa).

The protein belongs to the RNA polymerase subunit omega family. The RNAP catalytic core consists of 2 alpha, 1 beta, 1 beta' and 1 omega subunit. When a sigma factor is associated with the core the holoenzyme is formed, which can initiate transcription.

It catalyses the reaction RNA(n) + a ribonucleoside 5'-triphosphate = RNA(n+1) + diphosphate. In terms of biological role, promotes RNA polymerase assembly. Latches the N- and C-terminal regions of the beta' subunit thereby facilitating its interaction with the beta and alpha subunits. This Polaromonas naphthalenivorans (strain CJ2) protein is DNA-directed RNA polymerase subunit omega.